A 392-amino-acid polypeptide reads, in one-letter code: Ribosomal RNA large subunit methyltransferase G (392 aa).

The protein belongs to the methyltransferase superfamily. RlmG family.

It is found in the cytoplasm. It catalyses the reaction guanosine(1835) in 23S rRNA + S-adenosyl-L-methionine = N(2)-methylguanosine(1835) in 23S rRNA + S-adenosyl-L-homocysteine + H(+). Functionally, specifically methylates the guanine in position 1835 (m2G1835) of 23S rRNA. The polypeptide is Ribosomal RNA large subunit methyltransferase G (Colwellia psychrerythraea (strain 34H / ATCC BAA-681) (Vibrio psychroerythus)).